Reading from the N-terminus, the 217-residue chain is Ribonuclease HII (217 aa).

An RNase H type-2 domain is found at 16-217; that stretch reads YCIAGVDEVG…VARVLGTYHD (202 aa). The a divalent metal cation site is built by D22, E23, and D114.

Belongs to the RNase HII family. Mn(2+) is required as a cofactor. Requires Mg(2+) as cofactor.

It is found in the cytoplasm. The catalysed reaction is Endonucleolytic cleavage to 5'-phosphomonoester.. Endonuclease that specifically degrades the RNA of RNA-DNA hybrids. In Colwellia psychrerythraea (strain 34H / ATCC BAA-681) (Vibrio psychroerythus), this protein is Ribonuclease HII.